A 138-amino-acid chain; its full sequence is Transcription antitermination protein NusB (138 aa).

The protein belongs to the NusB family.

Its function is as follows. Involved in transcription antitermination. Required for transcription of ribosomal RNA (rRNA) genes. Binds specifically to the boxA antiterminator sequence of the ribosomal RNA (rrn) operons. This Helicobacter pylori (strain P12) protein is Transcription antitermination protein NusB.